Consider the following 300-residue polypeptide: GTPase Era (300 aa).

The region spanning 8 to 176 (RCGYVAIVGR…ESLIASHLPE (169 aa)) is the Era-type G domain. The G1 stretch occupies residues 16–23 (GRPNVGKS). 16 to 23 (GRPNVGKS) serves as a coordination point for GTP. The interval 42-46 (QTTRH) is G2. The tract at residues 63 to 66 (DTPG) is G3. Residues 63-67 (DTPGM) and 125-128 (NKTD) each bind GTP. The tract at residues 125–128 (NKTD) is G4. The interval 155-157 (ISA) is G5. Residues 199-283 (VREKIMRQLG…MLNLWVKVKG (85 aa)) form the KH type-2 domain.

Belongs to the TRAFAC class TrmE-Era-EngA-EngB-Septin-like GTPase superfamily. Era GTPase family. As to quaternary structure, monomer.

It localises to the cytoplasm. The protein localises to the cell inner membrane. In terms of biological role, an essential GTPase that binds both GDP and GTP, with rapid nucleotide exchange. Plays a role in 16S rRNA processing and 30S ribosomal subunit biogenesis and possibly also in cell cycle regulation and energy metabolism. The protein is GTPase Era of Pseudomonas savastanoi pv. phaseolicola (strain 1448A / Race 6) (Pseudomonas syringae pv. phaseolicola (strain 1448A / Race 6)).